The sequence spans 135 residues: Retinol-binding protein 5 (135 aa).

This sequence belongs to the calycin superfamily. Fatty-acid binding protein (FABP) family. In terms of tissue distribution, kidney.

It localises to the cytoplasm. Intracellular transport of retinol. In Bos taurus (Bovine), this protein is Retinol-binding protein 5 (RBP5).